Here is a 398-residue protein sequence, read N- to C-terminus: Small ribosomal subunit protein mS78 (rPPR3a) (398 aa).

A mitochondrion-targeting transit peptide spans 1–19 (MSSLSRVLRGTFNTCPIRR). PPR repeat units follow at residues 108–142 (KEGFAARIISLYGKAGMFENAQKVFEEMPNRDCKR), 143–173 (SVLSFNALLSAYRLSKKFDVVEELFNELPGK), 179–213 (DIVSYNTLIKALCEKDSLPEAVALLDEIENKGLKP), 214–248 (DIVTFNTLLLSSYLKGQFELGEEIWAKMVEKNVAI), 249–283 (DIRTYNARLLGLANEAKSKELVNLFGELKASGLKP), 284–318 (DVFSFNAMIRGSINEGKMDEAEAWYKEIVKHGYRP), and 319–353 (DKATFALLLPAMCKAGDFESAIELFKETFSKRYLV).

Belongs to the PPR family. P subfamily. As to quaternary structure, component of the mitochondrial ribosome small subunit.

The protein resides in the mitochondrion. In Arabidopsis thaliana (Mouse-ear cress), this protein is Small ribosomal subunit protein mS78 (rPPR3a).